Reading from the N-terminus, the 362-residue chain is Spermidine/putrescine import ATP-binding protein PotA (362 aa).

An ABC transporter domain is found at 4–235 (IKLDHITKQY…PVNDFVARFI (232 aa)). An ATP-binding site is contributed by 37-44 (GPSGSGKT).

It belongs to the ABC transporter superfamily. Spermidine/putrescine importer (TC 3.A.1.11.1) family. In terms of assembly, the complex is composed of two ATP-binding proteins (PotA), two transmembrane proteins (PotB and PotC) and a solute-binding protein (PotD).

It is found in the cell membrane. It carries out the reaction ATP + H2O + polyamine-[polyamine-binding protein]Side 1 = ADP + phosphate + polyamineSide 2 + [polyamine-binding protein]Side 1.. Part of the ABC transporter complex PotABCD involved in spermidine/putrescine import. Responsible for energy coupling to the transport system. This is Spermidine/putrescine import ATP-binding protein PotA from Lactobacillus delbrueckii subsp. bulgaricus (strain ATCC BAA-365 / Lb-18).